The chain runs to 333 residues: MIETLLQSPSSWTNFFIFFGLAVLLLFAVLGFVTYGILAERKVMGFMQGRIGPNQVGGRFGLLQTVADVLKLLLKEDSIPKAADKPLFILAPVIAFAPAFMVLAVIPFTDKFQFADIGVGLLYYIAVSGITTIGVVTGGWASNNKYSLLGGMRAAAQMISYEIPLVMSVIGIVLLAGSLNLNEIVAAQEKVWYIFVQPIGFVVFLIAAVAELNRTPFDLPEAESELVSGYHTEYSGFRWAFFMLSEYVYFFGMASLITVLFLGGWNPVMFLGFIPGAVWFALKFSSVVFLLIWFRVTFPRIRGDQLMEFGWKVLLPIALANIFLTALIKELFF.

Helical transmembrane passes span 15–35 (FFIF…FVTY), 88–108 (FILA…VIPF), 117–137 (IGVG…GVVT), 159–179 (ISYE…AGSL), 191–211 (VWYI…AVAE), 239–259 (WAFF…LITV), 274–296 (IPGA…WFRV), and 313–333 (VLLP…ELFF).

It belongs to the complex I subunit 1 family. As to quaternary structure, NDH-1 is composed of 14 different subunits. Subunits NuoA, H, J, K, L, M, N constitute the membrane sector of the complex.

It is found in the cell membrane. The catalysed reaction is a quinone + NADH + 5 H(+)(in) = a quinol + NAD(+) + 4 H(+)(out). NDH-1 shuttles electrons from NADH, via FMN and iron-sulfur (Fe-S) centers, to quinones in the respiratory chain. The immediate electron acceptor for the enzyme in this species is believed to be ubiquinone. Couples the redox reaction to proton translocation (for every two electrons transferred, four hydrogen ions are translocated across the cytoplasmic membrane), and thus conserves the redox energy in a proton gradient. This subunit may bind ubiquinone. This chain is NADH-quinone oxidoreductase subunit H, found in Bacillus cereus (strain G9842).